Here is a 143-residue protein sequence, read N- to C-terminus: Type II secretion system core protein G (143 aa).

The propeptide at 1–17 (MIKRSITRSPSRAGQAG) is leader sequence. The residue at position 18 (Met-18) is an N-methylmethionine. A helical transmembrane segment spans residues 18-38 (MSLLEIIIVIVLIGAVLTLVG).

It belongs to the GSP G family. In terms of assembly, type II secretion system is composed of four main components: the outer membrane complex, the inner membrane complex, the cytoplasmic secretion ATPase and the periplasm-spanning pseudopilus. Forms homomultimers. Interacts with pseudopilin tip complex component XpsJ as well as XpsI and XcpH. Interacts with XpsN and secretin XpsD. In terms of processing, cleaved by the prepilin peptidase. Methylated by prepilin peptidase at the amino group of the N-terminal methionine once the leader sequence is cleaved.

The protein localises to the cell inner membrane. Core component of the type II secretion system required for the energy-dependent secretion of extracellular factors such as proteases and toxins from the periplasm. Pseudopilin (pilin-like) protein that polymerizes to form the pseudopilus. Further polymerization triggers pseudopilus growth. This Xanthomonas campestris pv. campestris (strain ATCC 33913 / DSM 3586 / NCPPB 528 / LMG 568 / P 25) protein is Type II secretion system core protein G (xpsG).